Reading from the N-terminus, the 322-residue chain is Probable transcription factor KAN3 (322 aa).

Residues 1–35 are disordered; the sequence is MELFPSQPDLYLKISRRREEEQEKESQELQEQEVE. The segment covering 17–35 has biased composition (basic and acidic residues); sequence RREEEQEKESQELQEQEVE. The region spanning 161-221 is the HTH myb-type domain; sequence GVRAPRMRWT…HLQMYRTIKS (61 aa). The H-T-H motif DNA-binding region spans 192 to 217; the sequence is PKSVLELMDVQDLTLAHVKSHLQMYR. Disordered stretches follow at residues 222-244 and 267-322; these read TEKP…NSER and KASS…NLSP. Composition is skewed to polar residues over residues 224–241 and 299–322; these read KPTT…SQVN and LTGT…NLSP.

In terms of tissue distribution, expressed in developing phloem.

It is found in the nucleus. Its function is as follows. Probable transcription factor that regulates lateral organ polarity. Plays a role in lateral root formation and development. The protein is Probable transcription factor KAN3 (KAN3) of Arabidopsis thaliana (Mouse-ear cress).